Here is a 112-residue protein sequence, read N- to C-terminus: uncharacterized protein (112 aa).

Residues 1–25 (MKGTKLAVVVGMTVAAVSLAAPAQA) form the signal peptide.

This is an uncharacterized protein from Mycobacterium tuberculosis (strain CDC 1551 / Oshkosh).